The chain runs to 467 residues: Asparagine--tRNA ligase (467 aa).

This sequence belongs to the class-II aminoacyl-tRNA synthetase family. Homodimer.

The protein resides in the cytoplasm. The enzyme catalyses tRNA(Asn) + L-asparagine + ATP = L-asparaginyl-tRNA(Asn) + AMP + diphosphate + H(+). In Legionella pneumophila (strain Paris), this protein is Asparagine--tRNA ligase.